A 713-amino-acid chain; its full sequence is MEELGRVRLSDPDALLPAGFWAAVTVWLERPQVANKRLCGARMEARGRTLRSHAQAECGPRQGQGHGLEREPGQASPKGEPESGPRASREGTAPAADLNSLWDRVSQSLVHANPEMLAFLCGPSLGPQPEAAQELDLILRTVIPKASPHSPLTEPKKELVVQDVSSGSVTFLPLEEDNEGNLEVKTSNVYQLHLHHNEGEWFISVLIFCPERWHSDGVVYPKPAWLGEELLSKLARWAVENRKSEFKSTLSLVSILRYSRMYQELKEKYRDMVKVWPEVTDPEKFVYEDVAIATYLLILWEEERAEKGVTTKQSFVDLGCGNGLLVHILSNEGHPGRGIDIRRRKIWDMYGPQTQLEEGSITPSDETLFPGVDWLIGNHSDELTPWIPVIAARSSYTCRFFVLPCCFFDFVGRYQRQQSRKTQYREYLDFVLEVGLSCGFHVQEDCLRIPSTKRVCLIGKSRTYPPSAEVWMDEQRTRYLHSRQGHPQSRPGGAHAPSAPQTAAHDAGLQDSCRTVNAGSECVLEGLAAERGAGAPAPGLWVPGFCPREKAERVRNCAALPRDFVDQVVLQVANLLLDRKKFNTGNSEARSLKPWNGGGSLSLAEVAAELNSETLQRLKRECGGLQTLLKNSHQVFEVLNGRVHIRDWRQELQRGKPPEAKQNLSAAVFKTRICWFFAHHPDGCVLPAAQCPFAHGPEELRLSQTLKKQRQAP.

2 disordered regions span residues 49 to 92 (TLRS…REGT) and 480 to 508 (LHSR…HDAG). Ser76 carries the phosphoserine modification. The segment covering 79 to 89 (GEPESGPRASR) has biased composition (basic and acidic residues). Ser489 carries the post-translational modification Phosphoserine. The segment at 669–698 (FKTRICWFFAHHPDGCVLPAAQCPFAHGPE) adopts a C3H1-type zinc-finger fold.

The protein belongs to the TRM44 family.

Its subcellular location is the cytoplasm. The enzyme catalyses uridine(44) in tRNA(Ser) + S-adenosyl-L-methionine = 2'-O-methyluridine(44) in tRNA(Ser) + S-adenosyl-L-homocysteine + H(+). Its function is as follows. Probable adenosyl-L-methionine (AdoMet)-dependent tRNA (uracil-O(2)-)-methyltransferase. In Mus musculus (Mouse), this protein is Probable tRNA (uracil-O(2)-)-methyltransferase (Trmt44).